The primary structure comprises 534 residues: tRNA uridine(34) acetyltransferase (534 aa).

The radical S-adenosyl-L-methionine (rSAM) stretch occupies residues 70-330 (KPVRTISGVA…GEFKPYREEE (261 aa)). The 272-residue stretch at 73–344 (RTISGVAVVA…ISYAKSIMPK (272 aa)) folds into the Radical SAM core domain. Positions 90, 95, and 98 each coordinate [4Fe-4S] cluster. Lys150 serves as a coordination point for acetyl-CoA. A disulfide bond links Cys384 and Cys389. The N-acetyltransferase domain maps to 387–534 (IRCREVGHVY…RVGAYMGKEL (148 aa)). Acetyl-CoA is bound by residues 461-464 (QLHV), 485-487 (YGR), and Tyr518.

This sequence belongs to the ELP3 family. The cofactor is [4Fe-4S] cluster.

It carries out the reaction uridine(34) in tRNA + acetyl-CoA + S-adenosyl-L-methionine + H2O = 5-(carboxymethyl)uridine(34) in tRNA + 5'-deoxyadenosine + L-methionine + CoA + 2 H(+). It functions in the pathway tRNA modification. In terms of biological role, tRNA uridine(34) acetyltransferase, which mediates formation of carboxymethyluridine in the wobble base at position 34 in tRNAs. The proposed mechanism is the following: (i) recruits S-adenosyl-L-methionine and cleaves it to generate a 5'-deoxyadenosine radical (5'-dA) in the radical S-adenosyl-L-methionine (rSAM) region, (ii) hydrolyzes acetyl-CoA in the N-acetyltransferase domain and (iii) an acetyl radical is formed by the products of the two domains and (iv) is transferred onto the C5 position of uridine(34) in the bound tRNA molecule. Does not show protein lysine acetyltransferase activity. This chain is tRNA uridine(34) acetyltransferase, found in Methanocaldococcus infernus (strain DSM 11812 / JCM 15783 / ME).